Consider the following 704-residue polypeptide: Elongation factor G (704 aa).

The tr-type G domain occupies 8–291 (DKVRNIGIMA…AVIDYLASPV (284 aa)). Residues 17-24 (AHIDAGKT), 90-94 (DTPGH), and 144-147 (NKMD) each bind GTP.

This sequence belongs to the TRAFAC class translation factor GTPase superfamily. Classic translation factor GTPase family. EF-G/EF-2 subfamily.

It localises to the cytoplasm. In terms of biological role, catalyzes the GTP-dependent ribosomal translocation step during translation elongation. During this step, the ribosome changes from the pre-translocational (PRE) to the post-translocational (POST) state as the newly formed A-site-bound peptidyl-tRNA and P-site-bound deacylated tRNA move to the P and E sites, respectively. Catalyzes the coordinated movement of the two tRNA molecules, the mRNA and conformational changes in the ribosome. The sequence is that of Elongation factor G from Chlorobaculum parvum (strain DSM 263 / NCIMB 8327) (Chlorobium vibrioforme subsp. thiosulfatophilum).